The chain runs to 204 residues: Probable GTP-binding protein EngB (204 aa).

The tract at residues 1-21 (MKVSSAEFVTSGTRPAHYPPP) is disordered. The EngB-type G domain occupies 22 to 194 (ELPEVAFAGR…WARIEVMLAA (173 aa)). GTP-binding positions include 30 to 37 (GRSNVGKS), 57 to 61 (GRTQL), 75 to 78 (DLPG), 142 to 145 (TKCD), and 173 to 175 (FSA). Mg(2+)-binding residues include Ser-37 and Thr-59.

The protein belongs to the TRAFAC class TrmE-Era-EngA-EngB-Septin-like GTPase superfamily. EngB GTPase family. Mg(2+) serves as cofactor.

In terms of biological role, necessary for normal cell division and for the maintenance of normal septation. In Geobacter metallireducens (strain ATCC 53774 / DSM 7210 / GS-15), this protein is Probable GTP-binding protein EngB.